Here is a 430-residue protein sequence, read N- to C-terminus: NAD(P)(+) glycohydrolase toxin Tse6 (430 aa).

A run of 3 helical transmembrane segments spans residues 17–37 (FGVA…AAVV), 46–66 (LAAV…FQIV), and 193–213 (LLLA…IGGL).

As to quaternary structure, interacts with Tsi6, VgrG1a, EagT6 and EF-Tu.

Its subcellular location is the membrane. The catalysed reaction is NAD(+) + H2O = ADP-D-ribose + nicotinamide + H(+). Its function is as follows. Type VI secretion exported toxin that acts as a glycohydrolase on bacterial target cells and degrades the essential dinucleotides NAD(+) and NADP(+), thereby inducing bacteriostasis. The activity resides in the C-terminal region that is initially neutralized by the cognate immunity protein Tsi6. The sequence is that of NAD(P)(+) glycohydrolase toxin Tse6 from Pseudomonas aeruginosa (strain ATCC 15692 / DSM 22644 / CIP 104116 / JCM 14847 / LMG 12228 / 1C / PRS 101 / PAO1).